We begin with the raw amino-acid sequence, 481 residues long: tRNA-2-methylthio-N(6)-dimethylallyladenosine synthase (481 aa).

The MTTase N-terminal domain maps to 24–140 (RKLFIESYGC…LPNLINEVEE (117 aa)). [4Fe-4S] cluster-binding residues include cysteine 33, cysteine 69, cysteine 103, cysteine 178, cysteine 182, and cysteine 185. Residues 164–410 (QSNGVSAFVS…VDLQQKHSKQ (247 aa)) form the Radical SAM core domain. The TRAM domain maps to 413–476 (NSVIGTTVEV…SATLIGEPIG (64 aa)).

Belongs to the methylthiotransferase family. MiaB subfamily. In terms of assembly, monomer. Requires [4Fe-4S] cluster as cofactor.

It localises to the cytoplasm. It catalyses the reaction N(6)-dimethylallyladenosine(37) in tRNA + (sulfur carrier)-SH + AH2 + 2 S-adenosyl-L-methionine = 2-methylsulfanyl-N(6)-dimethylallyladenosine(37) in tRNA + (sulfur carrier)-H + 5'-deoxyadenosine + L-methionine + A + S-adenosyl-L-homocysteine + 2 H(+). Catalyzes the methylthiolation of N6-(dimethylallyl)adenosine (i(6)A), leading to the formation of 2-methylthio-N6-(dimethylallyl)adenosine (ms(2)i(6)A) at position 37 in tRNAs that read codons beginning with uridine. This is tRNA-2-methylthio-N(6)-dimethylallyladenosine synthase from Christiangramia forsetii (strain DSM 17595 / CGMCC 1.15422 / KT0803) (Gramella forsetii).